A 312-amino-acid polypeptide reads, in one-letter code: tRNA uridine(34) hydroxylase (312 aa).

Residues 130-225 (RGDEVVFFDG…YGEQFGNKGL (96 aa)) enclose the Rhodanese domain. Catalysis depends on cysteine 185, which acts as the Cysteine persulfide intermediate.

Belongs to the TrhO family.

The catalysed reaction is uridine(34) in tRNA + AH2 + O2 = 5-hydroxyuridine(34) in tRNA + A + H2O. Its function is as follows. Catalyzes oxygen-dependent 5-hydroxyuridine (ho5U) modification at position 34 in tRNAs. The chain is tRNA uridine(34) hydroxylase from Corynebacterium glutamicum (strain ATCC 13032 / DSM 20300 / JCM 1318 / BCRC 11384 / CCUG 27702 / LMG 3730 / NBRC 12168 / NCIMB 10025 / NRRL B-2784 / 534).